Reading from the N-terminus, the 187-residue chain is Troponin I, slow skeletal muscle (187 aa).

P2 is modified (N-acetylproline). An involved in binding TNC region spans residues 2 to 48; it reads PEVERKSKITASRKLMLKSLMLAKAKECWEQEHEEREAEKVRYLSER. The residue at position 58 (S58) is a Phosphoserine. Residues 97 to 118 are involved in binding TNC and actin; it reads LKLKVLDLRGKFKRPPLRRVRV.

Belongs to the troponin I family. As to quaternary structure, binds to actin and tropomyosin.

Functionally, troponin I is the inhibitory subunit of troponin, the thin filament regulatory complex which confers calcium-sensitivity to striated muscle actomyosin ATPase activity. This is Troponin I, slow skeletal muscle (Tnni1) from Rattus norvegicus (Rat).